We begin with the raw amino-acid sequence, 208 residues long: Large ribosomal subunit protein bL25 (208 aa).

It belongs to the bacterial ribosomal protein bL25 family. CTC subfamily. In terms of assembly, part of the 50S ribosomal subunit; part of the 5S rRNA/L5/L18/L25 subcomplex. Contacts the 5S rRNA. Binds to the 5S rRNA independently of L5 and L18.

This is one of the proteins that binds to the 5S RNA in the ribosome where it forms part of the central protuberance. This is Large ribosomal subunit protein bL25 from Bordetella pertussis (strain Tohama I / ATCC BAA-589 / NCTC 13251).